A 201-amino-acid polypeptide reads, in one-letter code: Large ribosomal subunit protein uL4 (201 aa).

The interval 44–66 (KAQKTRAEVRGGGKKPWRQKGTG) is disordered. Over residues 55 to 66 (GGKKPWRQKGTG) the composition is skewed to basic residues.

Belongs to the universal ribosomal protein uL4 family. Part of the 50S ribosomal subunit.

In terms of biological role, one of the primary rRNA binding proteins, this protein initially binds near the 5'-end of the 23S rRNA. It is important during the early stages of 50S assembly. It makes multiple contacts with different domains of the 23S rRNA in the assembled 50S subunit and ribosome. Functionally, forms part of the polypeptide exit tunnel. The polypeptide is Large ribosomal subunit protein uL4 (Alteromonas mediterranea (strain DSM 17117 / CIP 110805 / LMG 28347 / Deep ecotype)).